The sequence spans 205 residues: Spermatogenesis-associated protein 24 (205 aa).

Positions leucine 17–methionine 166 form a coiled coil. Residues glutamate 138 to glutamine 185 are required for interaction with CBX5 and TBPL1. The tract at residues alanine 180 to lysine 205 is disordered. A compositionally biased stretch (basic residues) spans lysine 186–lysine 205.

It belongs to the SPATA24 family. Homodimer. Interacts with CBX3, CBX5, GMNN, GTF2B, TBPL1 and the polycomb proteins PHCF2, RNF2 and SCMH1 but not with CBX1 or PCGF2.

Its subcellular location is the cytoplasm. The protein resides in the nucleus. It is found in the nucleolus. It localises to the nucleoplasm. In terms of biological role, binds DNA with high affinity but does not bind to TATA boxes. Synergises with GMNN and TBP in activation of TATA box-containing promoters and with GMNN and TBPL1 in activation of the NF1 TATA-less promoter. May play a role in cytoplasm movement and removal during spermiogenesis. The sequence is that of Spermatogenesis-associated protein 24 (SPATA24) from Homo sapiens (Human).